The following is a 103-amino-acid chain: Small ribosomal subunit protein uS10 (103 aa).

The protein belongs to the universal ribosomal protein uS10 family. Part of the 30S ribosomal subunit.

In terms of biological role, involved in the binding of tRNA to the ribosomes. The protein is Small ribosomal subunit protein uS10 of Aliivibrio fischeri (strain ATCC 700601 / ES114) (Vibrio fischeri).